The chain runs to 218 residues: Ras-related protein RABA1h (218 aa).

20-27 is a GTP binding site; that stretch reads GDSGVGKS. Residues 42 to 50 carry the Effector region motif; sequence SRSTIGVEF. GTP contacts are provided by residues 68-72, 126-129, and 156-157; these read DTAGQ, NKAD, and SA. S-geranylgeranyl cysteine attachment occurs at residues cysteine 215 and cysteine 216.

This sequence belongs to the small GTPase superfamily. Rab family.

The protein resides in the cell membrane. Intracellular vesicle trafficking and protein transport. In Arabidopsis thaliana (Mouse-ear cress), this protein is Ras-related protein RABA1h (RABA1H).